A 295-amino-acid polypeptide reads, in one-letter code: Hydroxylase/desaturase efuI (295 aa).

Belongs to the asaB hydroxylase/desaturase family.

The protein operates within secondary metabolite biosynthesis; terpenoid biosynthesis. Hydroxylase/desaturase; part of the gene cluster that mediates the biosynthesis of enfumafungin, a glycosylated fernene-type triterpenoid with potent antifungal activity, mediated by its interaction with beta-1,3-glucan synthase and the fungal cell wall. The pathway begins with the terpene cyclase-glycosyl transferase fusion protein that most likely uses 2,3-oxidosqualene as substrate and catalyzes glycosylation immediately after cyclization. The fernene glycoside then could be processed by the desaturase efuI which catalyzes isomerization of a double bond established by efuA to form the core structure. The latter would then undergo a series of hydroxylations in unknown order at C-2, C-19, C-23 and C-25, which would be catalyzed by two of the three cytochrome P450 monooxygenases efuB, efuG or efuH. The hydroxy-group at C-25 becomes oxidized by the dehydrogenase efuE to enable a spontaneous, non-enzymatic hemiacetal formation with C-23. After hydroxylation at C-2, acetylation by the acetyltransferase efuC takes place. The final steps in enfumafungin biosynthesis require expansion of the 5-membered ring by lactonization via a Baeyer-Villiger reaction mediated by one of the BGC's cytochrome P450 monooxygenases (efuB, efuG or efuH) followed by ring cleavage. This type of reaction would establish a double bond between C-20 and C-21 which could be reduced by the reductase efuL to form the final product. This is Hydroxylase/desaturase efuI from Hormonema carpetanum.